The chain runs to 298 residues: Triosephosphate isomerase, chloroplastic (298 aa).

The segment covering Met1–Pro18 has biased composition (pro residues). A disordered region spans residues Met1–Ala32. Residues Met1–Met43 constitute a chloroplast transit peptide. Residues Arg19–Ala32 show a composition bias toward low complexity. Substrate is bound by residues Asn54 and Lys56. His138 acts as the Electrophile in catalysis. Cys186 bears the Cysteine derivative mark. Residue Glu208 is the Proton acceptor of the active site.

This sequence belongs to the triosephosphate isomerase family. Homodimer.

The protein resides in the plastid. It localises to the chloroplast. The catalysed reaction is D-glyceraldehyde 3-phosphate = dihydroxyacetone phosphate. The protein operates within carbohydrate biosynthesis; Calvin cycle. In Secale cereale (Rye), this protein is Triosephosphate isomerase, chloroplastic.